The chain runs to 746 residues: PAN2-PAN3 deadenylation complex subunit pan3 (746 aa).

A C3H1-type zinc finger spans residues 7–35 (PKNQKQCKNIALHGYCRNSDKCEFSHELT). Residues 64–97 (QQQQQQQNSNGNGSNNTATSNNPIISPNSNIASP) show a composition bias toward low complexity. Disordered regions lie at residues 64-100 (QQQQ…PLKK), 169-205 (DDQH…NMNN), and 219-275 (NASP…PSLQ). The span at 196–205 (NNGIDPNMNN) shows a compositional bias: polar residues. The segment covering 221-275 (SPQSYQQQFQQPNPSPQSSSQQQQQQQQQQQQAVYQQQQQQQPSSQPLAQNPSLQ) has biased composition (low complexity). Residues 351-610 (DPNDPRIKNI…NIDEVVLMIS (260 aa)) form a pseudokinase domain region. ATP-binding positions include R407, 457–464 (EFFPGSET), and 509–510 (SK). A coiled-coil region spans residues 611–649 (GRLLQENNYLHTYTDDLETELSKEYENGRLFRLVTKLGF). The tract at residues 650–746 (INERPLYDMD…SELVSQKSHI (97 aa)) is knob domain.

This sequence belongs to the protein kinase superfamily. PAN3 family. As to quaternary structure, homodimer. Forms a heterotrimer with a catalytic subunit PAN2 to form the poly(A)-nuclease (PAN) deadenylation complex. Interacts (via PAM-2 motif) with poly(A)-binding protein (via PABC domain), conferring substrate specificity of the enzyme complex.

The protein resides in the cytoplasm. Its function is as follows. Regulatory subunit of the poly(A)-nuclease (PAN) deadenylation complex, one of two cytoplasmic mRNA deadenylases involved in mRNA turnover. PAN specifically shortens poly(A) tails of RNA and the activity is stimulated by poly(A)-binding protein (PABP). PAN deadenylation is followed by rapid degradation of the shortened mRNA tails by the CCR4-NOT complex. Deadenylated mRNAs are then degraded by two alternative mechanisms, namely exosome-mediated 3'-5' exonucleolytic degradation, or deadenylation-dependent mRNA decaping and subsequent 5'-3' exonucleolytic degradation by XRN1. PAN3 acts as a positive regulator for PAN activity, recruiting the catalytic subunit PAN2 to mRNA via its interaction with RNA and PABP. In Dictyostelium discoideum (Social amoeba), this protein is PAN2-PAN3 deadenylation complex subunit pan3.